The chain runs to 814 residues: Echinoderm microtubule-associated protein-like 1 (814 aa).

A coiled-coil region spans residues 31–72 (SMEVSDRIASLEQRVQMQEDDIQLLKSALADVVRRLNITEEQ). The disordered stretch occupies residues 77 to 180 (NRKGPTKARP…ESKPKEPAFS (104 aa)). A compositionally biased stretch (polar residues) spans 92 to 101 (PLRTTVNNGT). Positions 103–115 (LPKKPSASLPAPS) are enriched in low complexity. Positions 127–137 (KSINRTSSSER) are enriched in polar residues. Basic and acidic residues predominate over residues 142–152 (GRRESSGDSKG). The segment covering 155 to 167 (NRTGSTSSSSSGK) has biased composition (low complexity). Residues 175–814 (KEPAFSPEEG…DTSIMQWRVI (640 aa)) are tandem atypical propeller in EMLs. WD repeat units lie at residues 260–309 (EQLQ…IWDS), 314–357 (TLHV…VWDW), 362–399 (RLAD…FWTL), 408–445 (QGLF…VWGK), 449–488 (RISY…SWNG), 492–529 (KLHK…LQGT), 534–571 (FTPI…LWDA), 577–612 (VWDK…VFDT), 616–654 (DLVT…IYGV), 663–700 (RVGK…YWVP), 708–767 (SVET…LFSY), and 774–813 (APSH…QWRV).

This sequence belongs to the WD repeat EMAP family. Homotrimer; self-association is mediated by the N-terminal coiled coil. Does not interact with EML3. Binds unpolymerized tubulins via its WD repeat region. Binds repolymerizing microtubules. Interacts with TASOR. As to expression, detected in adult brain cortex, hippocampus and thalamus. Expressed in the stomach, lungs and in Sertoli cells of the testis.

Its subcellular location is the cytoplasm. It localises to the perinuclear region. It is found in the cytoskeleton. In terms of biological role, modulates the assembly and organization of the microtubule cytoskeleton, and probably plays a role in regulating the orientation of the mitotic spindle and the orientation of the plane of cell division. Required for normal proliferation of neuronal progenitor cells in the developing brain and for normal brain development. Does not affect neuron migration per se. This is Echinoderm microtubule-associated protein-like 1 (Eml1) from Mus musculus (Mouse).